Reading from the N-terminus, the 250-residue chain is L-ascorbate peroxidase, cytosolic (250 aa).

Histidine 42 acts as the Proton acceptor in catalysis. The disordered stretch occupies residues valine 113–glycine 137. Positions proline 117–glycine 137 are enriched in basic and acidic residues. A heme b-binding site is contributed by histidine 163. 5 residues coordinate K(+): threonine 164, threonine 180, asparagine 182, isoleucine 185, and aspartate 187.

Belongs to the peroxidase family. Ascorbate peroxidase subfamily. It depends on heme b as a cofactor.

The protein resides in the cytoplasm. It carries out the reaction L-ascorbate + H2O2 = L-dehydroascorbate + 2 H2O. Functionally, plays a key role in hydrogen peroxide removal. The polypeptide is L-ascorbate peroxidase, cytosolic (APX1) (Pisum sativum (Garden pea)).